Reading from the N-terminus, the 221-residue chain is MSKLFQARFATTVNDTHCLPATPLREVAFAGRSNAGKSSALNVLCNQKRLAFASKTPGRTQHINYFGIFAKDDLLAYLVDLPGYGYAAVNHETKYHWNALLSDYLQEREQLVGMVLIVDARRGITELDEQMIQWFVPTGKPIHILLSKCDKLNKSECKHALEDVRKQLQQYDPALPDGTGESQQLTAQLFSSTKRIGLEEADNLIIKWLFEAETHEDEITS.

One can recognise an EngB-type G domain in the interval 23–211; sequence PLREVAFAGR…DNLIIKWLFE (189 aa). Residues S38 and T60 each contribute to the Mg(2+) site.

It belongs to the TRAFAC class TrmE-Era-EngA-EngB-Septin-like GTPase superfamily. EngB GTPase family. Mg(2+) serves as cofactor.

Functionally, necessary for normal cell division and for the maintenance of normal septation. This chain is Probable GTP-binding protein EngB, found in Polynucleobacter asymbioticus (strain DSM 18221 / CIP 109841 / QLW-P1DMWA-1) (Polynucleobacter necessarius subsp. asymbioticus).